Consider the following 721-residue polypeptide: Polyribonucleotide nucleotidyltransferase (721 aa).

Residues Asp-490 and Asp-496 each contribute to the Mg(2+) site. The region spanning 557 to 618 is the KH domain; that stretch reads PRILTLKINP…EAVRQKIEGL (62 aa). The S1 motif domain occupies 625 to 693; sequence GEEYEGTVVK…DRGKIDLIRP (69 aa). The tract at residues 696–721 is disordered; the sequence is EGKIAPREPRAARAGGDRGGRPPRRE.

It belongs to the polyribonucleotide nucleotidyltransferase family. Mg(2+) is required as a cofactor.

It localises to the cytoplasm. The catalysed reaction is RNA(n+1) + phosphate = RNA(n) + a ribonucleoside 5'-diphosphate. In terms of biological role, involved in mRNA degradation. Catalyzes the phosphorolysis of single-stranded polyribonucleotides processively in the 3'- to 5'-direction. In Deinococcus geothermalis (strain DSM 11300 / CIP 105573 / AG-3a), this protein is Polyribonucleotide nucleotidyltransferase.